We begin with the raw amino-acid sequence, 228 residues long: 5'(3')-deoxyribonucleotidase, mitochondrial (228 aa).

Residues 1–31 constitute a mitochondrion transit peptide; the sequence is MIRLGGWCARRLCSAAVPAGRRGAAGGLGLA. The Nucleophile role is filled by Asp41. Asp41 and Asp43 together coordinate Mg(2+). The active-site Proton donor is the Asp43. Residues Asp43, Phe49, Phe75, Trp76, Val77, Trp96, Thr130, and Lys165 each contribute to the substrate site. Mg(2+) is bound at residue Asp176.

It belongs to the 5'(3')-deoxyribonucleotidase family. Homodimer. Requires Mg(2+) as cofactor. As to expression, highly expressed in heart, brain and skeletal muscle. Detected at very low levels in kidney and pancreas.

Its subcellular location is the mitochondrion. Its function is as follows. Dephosphorylates specifically the 5' and 2'(3')-phosphates of uracil and thymine deoxyribonucleotides, and so protects mitochondrial DNA replication from excess dTTP. Has only marginal activity towards dIMP and dGMP. This Homo sapiens (Human) protein is 5'(3')-deoxyribonucleotidase, mitochondrial (NT5M).